A 366-amino-acid polypeptide reads, in one-letter code: Neutral protease 2 homolog BDBG_02110 (366 aa).

The signal sequence occupies residues 1–19; that stretch reads MQLSSVLLTAAGLLAPVYS. The propeptide occupies 23-184; sequence ISIGRRSEGL…RAKIHDHLAQ (162 aa). N-linked (GlcNAc...) asparagine glycosylation is found at N123 and N192. An intrachain disulfide couples C272 to C290. Residue H314 participates in Zn(2+) binding. The active site involves E315. H318 is a Zn(2+) binding site.

This sequence belongs to the peptidase M35 family. It depends on Zn(2+) as a cofactor.

It localises to the secreted. It carries out the reaction Preferential cleavage of bonds with hydrophobic residues in P1'. Also 3-Asn-|-Gln-4 and 8-Gly-|-Ser-9 bonds in insulin B chain.. Its function is as follows. Secreted metalloproteinase that allows assimilation of proteinaceous substrates. Shows high activities on basic nuclear substrates such as histone and protamine. The sequence is that of Neutral protease 2 homolog BDBG_02110 from Blastomyces gilchristii (strain SLH14081) (Blastomyces dermatitidis).